The following is a 415-amino-acid chain: Histidine--tRNA ligase (415 aa).

Belongs to the class-II aminoacyl-tRNA synthetase family. As to quaternary structure, homodimer.

The protein resides in the cytoplasm. It carries out the reaction tRNA(His) + L-histidine + ATP = L-histidyl-tRNA(His) + AMP + diphosphate + H(+). In Rhodospirillum rubrum (strain ATCC 11170 / ATH 1.1.1 / DSM 467 / LMG 4362 / NCIMB 8255 / S1), this protein is Histidine--tRNA ligase.